We begin with the raw amino-acid sequence, 220 residues long: Probable cutinase 5 (220 aa).

Residues 1-18 (MVALHTLLLTAFAAVSLA) form the signal peptide. 2 disulfide bridges follow: C42/C121 and C68/C82. The active-site Nucleophile is the S132. A disulfide bridge connects residues C183 and C190. D187 is an active-site residue. The Proton donor/acceptor role is filled by H200.

Belongs to the cutinase family.

The protein localises to the secreted. It catalyses the reaction cutin + H2O = cutin monomers.. Functionally, catalyzes the hydrolysis of complex carboxylic polyesters found in the cell wall of plants. Degrades cutin, a macromolecule that forms the structure of the plant cuticle. This is Probable cutinase 5 from Aspergillus terreus (strain NIH 2624 / FGSC A1156).